Consider the following 210-residue polypeptide: Large ribosomal subunit protein uL4 (210 aa).

Positions 41-51 are enriched in polar residues; that stretch reads ANARQGTQSTK. Disordered stretches follow at residues 41 to 60 and 67 to 98; these read ANARQGTQSTKTRGEVQGSS and KGTGNARMGTNRSPVRRHGGVAFGPRPRDFSK.

It belongs to the universal ribosomal protein uL4 family. As to quaternary structure, part of the 50S ribosomal subunit.

Functionally, one of the primary rRNA binding proteins, this protein initially binds near the 5'-end of the 23S rRNA. It is important during the early stages of 50S assembly. It makes multiple contacts with different domains of the 23S rRNA in the assembled 50S subunit and ribosome. Its function is as follows. Forms part of the polypeptide exit tunnel. The polypeptide is Large ribosomal subunit protein uL4 (Dehalococcoides mccartyi (strain ATCC BAA-2266 / KCTC 15142 / 195) (Dehalococcoides ethenogenes (strain 195))).